Here is a 407-residue protein sequence, read N- to C-terminus: Multidrug resistance protein MdtH (407 aa).

10 helical membrane-spanning segments follow: residues 13-33 (CFLI…FPLI), 88-108 (LGFI…SCML), 139-159 (VLML…TWLL), 163-183 (FKLV…FNAW), 210-230 (FVIY…VMLM), 247-267 (WMYI…TWWS), 277-297 (LMVG…VKNL), 298-318 (HTLL…EPAR), 340-360 (LSLA…YDIG), and 368-388 (LPWI…YCQF).

The protein belongs to the major facilitator superfamily. DHA1 family. MdtH (TC 2.A.1.2.21) subfamily.

It is found in the cell inner membrane. This Blochmanniella pennsylvanica (strain BPEN) protein is Multidrug resistance protein MdtH.